The chain runs to 344 residues: Zinc metalloproteinase nas-6 (344 aa).

The N-terminal stretch at 1–19 (MLDHVLLLTYCLVSTVVRS) is a signal peptide. The Peptidase M12A domain occupies 72–266 (NALKNKQLTW…VKINKLYSCK (195 aa)). 5 disulfides stabilise this stretch: cysteine 114–cysteine 265, cysteine 135–cysteine 154, cysteine 300–cysteine 334, cysteine 307–cysteine 327, and cysteine 314–cysteine 331. Histidine 162 contributes to the Zn(2+) binding site. Glutamate 163 is an active-site residue. Zn(2+) is bound by residues histidine 166 and histidine 172. The ShKT domain occupies 300–334 (CVDHFADCPHFAQYCTRASFFFVMKSYCPFTCKHC).

It depends on Zn(2+) as a cofactor. In terms of tissue distribution, expressed in pharyngeal and body wall muscles, intestine, hypodermis and pharyngeal mc2 cells.

It is found in the secreted. Metalloprotease. The sequence is that of Zinc metalloproteinase nas-6 (nas-6) from Caenorhabditis elegans.